A 281-amino-acid chain; its full sequence is Very long chain fatty acid elongase 7 (281 aa).

Ala2 is subject to N-acetylalanine. Over Ala2–Asp27 the chain is Lumenal. A helical transmembrane segment spans residues Tyr28–Val48. The Cytoplasmic portion of the chain corresponds to Thr49–Asn72. Residues Phe73–Thr93 form a helical membrane-spanning segment. Residues Gly94–His115 are Lumenal-facing. A disulfide bridge links Cys99 with Cys231. The helical transmembrane segment at Thr116–Leu136 threads the bilayer. Residues Lys124, Arg137, Lys139, Gln142, and His147 each coordinate 3-oxoeicosanoyl-CoA. Topologically, residues Arg137–Gln142 are cytoplasmic. The chain crosses the membrane as a helical span at residues Val143–Val162. Positions His147–His151 match the HxxHH motif motif. The Nucleophile role is filled by His150. At Lys163 to Thr171 the chain is on the lumenal side. Residues Phe172–Gly194 traverse the membrane as a helical segment. 3-oxoeicosanoyl-CoA-binding residues include Tyr187, Lys204, Thr208, and Gln211. Residues Pro195–His206 lie on the Cytoplasmic side of the membrane. Residues Leu207–Phe227 form a helical membrane-spanning segment. The Lumenal portion of the chain corresponds to Met228–Pro236. Residues Val237–Trp257 traverse the membrane as a helical segment. Residues Tyr258–His281 lie on the Cytoplasmic side of the membrane. Arg266 lines the 3-oxoeicosanoyl-CoA pocket. The Di-lysine motif motif lies at Lys277–His281.

This sequence belongs to the ELO family. ELOVL7 subfamily. In terms of assembly, homodimer. Interacts with TECR.

The protein localises to the endoplasmic reticulum membrane. The enzyme catalyses a very-long-chain acyl-CoA + malonyl-CoA + H(+) = a very-long-chain 3-oxoacyl-CoA + CO2 + CoA. It catalyses the reaction eicosanoyl-CoA + malonyl-CoA + H(+) = 3-oxodocosanoyl-CoA + CO2 + CoA. The catalysed reaction is (5Z,8Z,11Z,14Z)-eicosatetraenoyl-CoA + malonyl-CoA + H(+) = (7Z,10Z,13Z,16Z)-3-oxodocosatetraenoyl-CoA + CO2 + CoA. It carries out the reaction (6Z,9Z,12Z)-octadecatrienoyl-CoA + malonyl-CoA + H(+) = (8Z,11Z,14Z)-3-oxoeicosatrienoyl-CoA + CO2 + CoA. The enzyme catalyses (9Z,12Z)-octadecadienoyl-CoA + malonyl-CoA + H(+) = (11Z,14Z)-3-oxoicosa-11,14-dienoyl-CoA + CO2 + CoA. It catalyses the reaction (9Z)-octadecenoyl-CoA + malonyl-CoA + H(+) = 3-oxo-(11Z)-eicosenoyl-CoA + CO2 + CoA. The catalysed reaction is octadecanoyl-CoA + malonyl-CoA + H(+) = 3-oxoeicosanoyl-CoA + CO2 + CoA. It carries out the reaction hexadecanoyl-CoA + malonyl-CoA + H(+) = 3-oxooctadecanoyl-CoA + CO2 + CoA. The enzyme catalyses (9Z,12Z,15Z)-octadecatrienoyl-CoA + malonyl-CoA + H(+) = (11Z,14Z,17Z)-3-oxoeicosatrienoyl-CoA + CO2 + CoA. It functions in the pathway lipid metabolism; fatty acid biosynthesis. Functionally, catalyzes the first and rate-limiting reaction of the four reactions that constitute the long-chain fatty acids elongation cycle. This endoplasmic reticulum-bound enzymatic process allows the addition of 2 carbons to the chain of long- and very long-chain fatty acids (VLCFAs) per cycle. Condensing enzyme with higher activity toward C18 acyl-CoAs, especially C18:3(n-3) acyl-CoAs and C18:3(n-6)-CoAs. Also active toward C20:4-, C18:0-, C18:1-, C18:2- and C16:0-CoAs, and weakly toward C20:0-CoA. Little or no activity toward C22:0-, C24:0-, or C26:0-CoAs. May participate in the production of saturated and polyunsaturated VLCFAs of different chain lengths that are involved in multiple biological processes as precursors of membrane lipids and lipid mediators. The polypeptide is Very long chain fatty acid elongase 7 (Mus musculus (Mouse)).